A 279-amino-acid chain; its full sequence is MAQRIKEEVKSEIEKLKEKGIESTLAVVIVGNDPASRSYVNSKKRTCLELGINSVEYALDTTTTQEQLENLIEKLNQDPKINGILVQLPLPNGLDESRVCKKILPQKDVDGFHPMNVGMLATGIDFEYSIKPCTPFGVIELLKRENIEIKGKHAVVIGRSNIVGKPLALLLLRENATVTICHSYTRDLKDICKTADILVAAVGKPKFVTADMVKEGAVVIDVGINRDETTKKIVGDVDFETVRRVASYITPVPGGVGPMTVAMLMKNTLFATLLQNGLI.

NADP(+) contacts are provided by residues 158 to 160 (GRS), serine 183, and isoleucine 224.

It belongs to the tetrahydrofolate dehydrogenase/cyclohydrolase family. In terms of assembly, homodimer.

It carries out the reaction (6R)-5,10-methylene-5,6,7,8-tetrahydrofolate + NADP(+) = (6R)-5,10-methenyltetrahydrofolate + NADPH. It catalyses the reaction (6R)-5,10-methenyltetrahydrofolate + H2O = (6R)-10-formyltetrahydrofolate + H(+). It participates in one-carbon metabolism; tetrahydrofolate interconversion. Catalyzes the oxidation of 5,10-methylenetetrahydrofolate to 5,10-methenyltetrahydrofolate and then the hydrolysis of 5,10-methenyltetrahydrofolate to 10-formyltetrahydrofolate. This is Bifunctional protein FolD from Caldicellulosiruptor saccharolyticus (strain ATCC 43494 / DSM 8903 / Tp8T 6331).